The chain runs to 390 residues: UDP-galactose translocator (390 aa).

Residues 1 to 24 form a disordered region; the sequence is MAAVGVGGSTAAAGAGAVSSGALE. 10 helical membrane-spanning segments follow: residues 3–23, 37–57, 65–85, 97–117, 140–160, 169–189, 200–220, 238–258, 269–289, and 315–335; these read AVGV…SGAL, YISL…IRYA, FFAT…CLLL, LVLF…KLAV, TFQV…VLML, WASL…QAGG, GAGL…GVYF, LGLF…GTAV, PAVW…AVVV, and LFGF…IGAV. A compositionally biased stretch (low complexity) spans 9-22; the sequence is STAAAGAGAVSSGA. Residues 356-390 are disordered; the sequence is PCIHQQPPGQPPPPQLSSRGDLTTEPFLPKSVLVK.

It belongs to the nucleotide-sugar transporter family. SLC35A subfamily. Interacts with SLC35A3; the interaction is reduced in the presence of SLC35A4. Found in a complex with SLC35A3 and SLC35A4.

Its subcellular location is the golgi apparatus membrane. The enzyme catalyses UMP(out) + UDP-alpha-D-galactose(in) = UMP(in) + UDP-alpha-D-galactose(out). The catalysed reaction is UDP-N-acetyl-alpha-D-galactosamine(in) + UMP(out) = UDP-N-acetyl-alpha-D-galactosamine(out) + UMP(in). It carries out the reaction UMP(out) + UDP-alpha-D-glucose(in) = UMP(in) + UDP-alpha-D-glucose(out). It catalyses the reaction UMP(out) + UDP-N-acetyl-alpha-D-glucosamine(in) = UMP(in) + UDP-N-acetyl-alpha-D-glucosamine(out). The enzyme catalyses UDP-alpha-D-galactose(in) + AMP(out) = UDP-alpha-D-galactose(out) + AMP(in). The catalysed reaction is UDP-alpha-D-galactose(in) + CMP(out) = UDP-alpha-D-galactose(out) + CMP(in). It carries out the reaction UDP-N-acetyl-alpha-D-galactosamine(out) + UDP-alpha-D-galactose(in) = UDP-N-acetyl-alpha-D-galactosamine(in) + UDP-alpha-D-galactose(out). It catalyses the reaction UDP-N-acetyl-alpha-D-glucosamine(out) + UDP-alpha-D-galactose(in) = UDP-N-acetyl-alpha-D-glucosamine(in) + UDP-alpha-D-galactose(out). The enzyme catalyses UDP-alpha-D-galactose(in) + UDP-alpha-D-glucose(out) = UDP-alpha-D-galactose(out) + UDP-alpha-D-glucose(in). The catalysed reaction is UMP(out) + CMP(in) = UMP(in) + CMP(out). It carries out the reaction UMP(out) + AMP(in) = UMP(in) + AMP(out). Transports uridine diphosphate galactose (UDP-galactose) from the cytosol into the Golgi apparatus. It functions as an antiporter that exchanges UDP-galactose for UMP. It is also able to exchange UDP-galactose for AMP and CMP, and to transport UDP-N-acetylgalactosamine (UDP-GalNAc) and other nucleotide sugars. As a provider of UDP-galactose to galactosyltransferases present in the Golgi apparatus, it is necessary for globotriaosylceramide/globoside (Gb3Cer) synthesis from lactosylceramide. This Mus musculus (Mouse) protein is UDP-galactose translocator.